We begin with the raw amino-acid sequence, 464 residues long: UDP-N-acetylmuramate--L-alanine ligase (464 aa).

112 to 118 (GTHGKTT) contacts ATP.

It belongs to the MurCDEF family.

The protein localises to the cytoplasm. The enzyme catalyses UDP-N-acetyl-alpha-D-muramate + L-alanine + ATP = UDP-N-acetyl-alpha-D-muramoyl-L-alanine + ADP + phosphate + H(+). It participates in cell wall biogenesis; peptidoglycan biosynthesis. Cell wall formation. The chain is UDP-N-acetylmuramate--L-alanine ligase from Acidithiobacillus ferrooxidans (strain ATCC 23270 / DSM 14882 / CIP 104768 / NCIMB 8455) (Ferrobacillus ferrooxidans (strain ATCC 23270)).